The primary structure comprises 252 residues: tRNA pseudouridine synthase A (252 aa).

Residue D52 is the Nucleophile of the active site. Y110 serves as a coordination point for substrate.

Belongs to the tRNA pseudouridine synthase TruA family. Homodimer.

The enzyme catalyses uridine(38/39/40) in tRNA = pseudouridine(38/39/40) in tRNA. Functionally, formation of pseudouridine at positions 38, 39 and 40 in the anticodon stem and loop of transfer RNAs. In Syntrophotalea carbinolica (strain DSM 2380 / NBRC 103641 / GraBd1) (Pelobacter carbinolicus), this protein is tRNA pseudouridine synthase A.